The primary structure comprises 663 residues: Bifunctional polymyxin resistance protein ArnA (663 aa).

The tract at residues 1-307 (MSSKAVVFAY…ELGLVDGSVL (307 aa)) is formyltransferase ArnAFT. The Proton donor; for formyltransferase activity role is filled by His106. Residues Arg116 and 138–142 (VKRAD) contribute to the (6R)-10-formyltetrahydrofolate site. The dehydrogenase ArnADH stretch occupies residues 317-663 (RRTRVLILGV…EAMLEIADKK (347 aa)). Residues Asp350 and 371–372 (DI) contribute to the NAD(+) site. UDP-alpha-D-glucuronate contacts are provided by residues Ala396, Tyr401, and 435–436 (TS). Glu437 (proton acceptor; for decarboxylase activity) is an active-site residue. UDP-alpha-D-glucuronate-binding positions include Arg463, Asn494, 528–537 (RLFDGGEQKR), and Tyr615. The Proton donor; for decarboxylase activity role is filled by Arg621.

It in the N-terminal section; belongs to the Fmt family. UDP-L-Ara4N formyltransferase subfamily. In the C-terminal section; belongs to the NAD(P)-dependent epimerase/dehydratase family. UDP-glucuronic acid decarboxylase subfamily. Homohexamer, formed by a dimer of trimers.

It carries out the reaction UDP-alpha-D-glucuronate + NAD(+) = UDP-beta-L-threo-pentopyranos-4-ulose + CO2 + NADH. The enzyme catalyses UDP-4-amino-4-deoxy-beta-L-arabinose + (6R)-10-formyltetrahydrofolate = UDP-4-deoxy-4-formamido-beta-L-arabinose + (6S)-5,6,7,8-tetrahydrofolate + H(+). It functions in the pathway nucleotide-sugar biosynthesis; UDP-4-deoxy-4-formamido-beta-L-arabinose biosynthesis; UDP-4-deoxy-4-formamido-beta-L-arabinose from UDP-alpha-D-glucuronate: step 1/3. Its pathway is nucleotide-sugar biosynthesis; UDP-4-deoxy-4-formamido-beta-L-arabinose biosynthesis; UDP-4-deoxy-4-formamido-beta-L-arabinose from UDP-alpha-D-glucuronate: step 3/3. The protein operates within bacterial outer membrane biogenesis; lipopolysaccharide biosynthesis. Bifunctional enzyme that catalyzes the oxidative decarboxylation of UDP-glucuronic acid (UDP-GlcUA) to UDP-4-keto-arabinose (UDP-Ara4O) and the addition of a formyl group to UDP-4-amino-4-deoxy-L-arabinose (UDP-L-Ara4N) to form UDP-L-4-formamido-arabinose (UDP-L-Ara4FN). The modified arabinose is attached to lipid A and is required for resistance to polymyxin and cationic antimicrobial peptides. This is Bifunctional polymyxin resistance protein ArnA from Pseudomonas fluorescens (strain SBW25).